A 468-amino-acid chain; its full sequence is Maltose fermentation regulatory protein MAL33 (468 aa).

Residues 8–34 constitute a DNA-binding region (zn(2)-C6 fungal-type); the sequence is CDYCRVRRVKCDGKKPCSRCIEHNFDC. Positions 41–49 match the Nuclear localization signal motif; sequence KKRGSKPIG.

Belongs to the MAL13 family.

It is found in the nucleus. Functionally, regulates the coordinate transcription of structural MAL3S (maltase) and MAL3T (maltose permease) genes. This chain is Maltose fermentation regulatory protein MAL33 (MAL33), found in Saccharomyces cerevisiae (strain ATCC 204508 / S288c) (Baker's yeast).